A 747-amino-acid polypeptide reads, in one-letter code: Rho GTPase-activating protein 24 (747 aa).

Disordered regions lie at residues 1-20 and 327-475; these read MEERCESTESPQGQGRKNTK and FPKD…GTHS. The region spanning 17 to 123 is the PH domain; it reads KNTKCGWLRK…WVKSIRRVIW (107 aa). In terms of domain architecture, Rho-GAP spans 133-327; sequence QKLEDTVRYE…VMISKHDRLF (195 aa). Composition is skewed to polar residues over residues 334 to 346 and 355 to 367; these read QSKPQDGPNSNNN and GQLQNKENNNTKE. A phosphoserine mark is found at serine 368, serine 390, serine 395, serine 397, serine 401, serine 412, serine 414, and serine 436. Basic and acidic residues predominate over residues 368 to 380; it reads SPVRRCSWDKPES. Residues 381–404 show a composition bias toward polar residues; it reads PQRSSVDNGSPTALSGSKTNSPRN. Polar residues predominate over residues 431–475; that stretch reads IVTNGSFSSSNAEGVEKPQTTPNGSLQARRTSSLKSSGTKMGTHS. Threonine 451 bears the Phosphothreonine mark. Serine 494 carries the post-translational modification Phosphoserine. The disordered stretch occupies residues 581 to 639; it reads DFYVGNFEDPVLDGPPQDDLSHPGDYENKSDRRSVGGRSSRATSSSDNSETFVGNTSSN. Positions 599–614 are enriched in basic and acidic residues; sequence DLSHPGDYENKSDRRS. Over residues 616 to 629 the composition is skewed to low complexity; that stretch reads GGRSSRATSSSDNS. The segment covering 630–639 has biased composition (polar residues); the sequence is ETFVGNTSSN. The stretch at 648-728 forms a coiled coil; sequence SSLKQEMTKQ…KEMEQFFSTF (81 aa).

Interacts with FLNA. In terms of processing, phosphorylated by ROCK, leading to activate the RacGAP activity.

The protein resides in the cytoplasm. The protein localises to the cytoskeleton. It localises to the cell junction. Its subcellular location is the adherens junction. It is found in the focal adhesion. The protein resides in the cell projection. Its function is as follows. Rho GTPase-activating protein involved in cell polarity, cell morphology and cytoskeletal organization. Acts as a GTPase activator for the Rac-type GTPase by converting it to an inactive GDP-bound state. Controls actin remodeling by inactivating Rac downstream of Rho leading to suppress leading edge protrusion and promotes cell retraction to achieve cellular polarity. Able to suppress RAC1 and CDC42 activity in vitro. Overexpression induces cell rounding with partial or complete disruption of actin stress fibers and formation of membrane ruffles, lamellipodia, and filopodia. Isoform 2 is a vascular cell-specific GAP involved in modulation of angiogenesis. The polypeptide is Rho GTPase-activating protein 24 (Arhgap24) (Mus musculus (Mouse)).